Here is a 394-residue protein sequence, read N- to C-terminus: MTHFTVSCLLVALFLCQSLVHAAYNGYYGYSPAAAPYPAEEPQNIMNPVDSCWRLKSDWDVNREDLADCAVGFGSSTLGGKKGNIYVVTNPYDNAQNPHPGSLRYGVIQAKPLWITFAKDMVITLANELMVNSYKTIDGRGAKVEIAYGPCITIQDVTNVIVHGISIHDCKPGKSGKVRSSPTHVGHRKGSDGDAITIFGSSNVWIDHCYLASCTDGLIDVIHASTAITISNNYFTQHDKVMLLGHNDNFVKDVKMKVTVAFNHFGPGLVERMPRVRRGYAHVANNRYDKWIMYAIGGSADPTIFSEGNYFIASDKSYSKEVTKREVKGGWNNWRWRTSNDVFKNGAFFVPSGYGSIPLPYSSAQRFTVAPGNLVPSLTADAGPLNCNRNGPCY.

An N-terminal signal peptide occupies residues 1 to 22 (MTHFTVSCLLVALFLCQSLVHA). 3 residues coordinate Ca(2+): Asp192, Asp216, and Asp220. Residue Arg272 is part of the active site.

It belongs to the polysaccharide lyase 1 family. Ca(2+) serves as cofactor.

The catalysed reaction is Eliminative cleavage of (1-&gt;4)-alpha-D-galacturonan to give oligosaccharides with 4-deoxy-alpha-D-galact-4-enuronosyl groups at their non-reducing ends.. Its pathway is glycan metabolism; pectin degradation; 2-dehydro-3-deoxy-D-gluconate from pectin: step 2/5. The protein is Putative pectate lyase 17 of Arabidopsis thaliana (Mouse-ear cress).